A 206-amino-acid polypeptide reads, in one-letter code: Small ribosomal subunit protein uS4 (206 aa).

One can recognise an S4 RNA-binding domain in the interval 94–156 (RRLDNVVYRL…SRRRMYFKNL (63 aa)).

This sequence belongs to the universal ribosomal protein uS4 family. In terms of assembly, part of the 30S ribosomal subunit. Contacts protein S5. The interaction surface between S4 and S5 is involved in control of translational fidelity.

In terms of biological role, one of the primary rRNA binding proteins, it binds directly to 16S rRNA where it nucleates assembly of the body of the 30S subunit. Its function is as follows. With S5 and S12 plays an important role in translational accuracy. This Roseiflexus castenholzii (strain DSM 13941 / HLO8) protein is Small ribosomal subunit protein uS4.